A 477-amino-acid chain; its full sequence is Histone-lysine N-methyltransferase SUV39H2 (477 aa).

The interval 1 to 59 is disordered; that stretch reads MATARAKARGSEAGARCHRAPGPPPRPKARRTARRRRAETLTARRSRPSAGERRAGSQR. Positions 27-37 are enriched in basic residues; that stretch reads PKARRTARRRR. The Chromo domain occupies 118–176; it reads YEVEYLCDYKVAKGVEYYLVKWKGWPDSTNTWEPLRNLRCPQLLRQFSDDKKTYLAQER. A Pre-SET domain is found at 256-314; it reads FGCSCTDCFFDKCCPAEAGVVLAYNKKQQIKIQPGTPIYECNSRCRCGPECPNRIVQKG. Positions 258, 260, 263, 268, 269, 296, 300, 302, and 306 each coordinate Zn(2+). One can recognise an SET domain in the interval 317 to 440; that stretch reads YSLCIFKTSN…AGEELTFDYQ (124 aa). Residues 328 to 330, tyrosine 371, and 397 to 398 contribute to the S-adenosyl-L-methionine site; these read CGW and NH. Cysteine 400 is a Zn(2+) binding site. Serine 448, serine 451, and serine 455 each carry phosphoserine. The Post-SET domain occupies 461 to 477; it reads VRTQCKCGAETCRGYLN. Residues cysteine 465, cysteine 467, and cysteine 472 each coordinate Zn(2+).

Belongs to the class V-like SAM-binding methyltransferase superfamily. Histone-lysine methyltransferase family. Suvar3-9 subfamily. As to quaternary structure, interacts with SMAD5. The large PER complex involved in the histone methylation is composed of at least PER2, CBX3, TRIM28, SUV39H1 and/or SUV39H2; CBX3 mediates the formation of the complex. In terms of processing, ubiquitinated by the DCX(DCAF13) E3 ubiquitin ligase complex, leading to its degradation. In terms of tissue distribution, testis specific; predominant expression in type B spermatogonia and preleptotene spermatocytes.

It localises to the nucleus. Its subcellular location is the chromosome. The protein resides in the centromere. The enzyme catalyses L-lysyl(9)-[histone H3] + 3 S-adenosyl-L-methionine = N(6),N(6),N(6)-trimethyl-L-lysyl(9)-[histone H3] + 3 S-adenosyl-L-homocysteine + 3 H(+). Histone methyltransferase that specifically trimethylates 'Lys-9' of histone H3 using monomethylated H3 'Lys-9' as substrate. H3 'Lys-9' trimethylation represents a specific tag for epigenetic transcriptional repression by recruiting HP1 (CBX1, CBX3 and/or CBX5) proteins to methylated histones. Mainly functions in heterochromatin regions, thereby playing a central role in the establishment of constitutive heterochromatin at pericentric and telomere regions. H3 'Lys-9' trimethylation is also required to direct DNA methylation at pericentric repeats. SUV39H1 is targeted to histone H3 via its interaction with RB1 and is involved in many processes, such as cell cycle regulation, transcriptional repression and regulation of telomere length. May participate in regulation of higher-order chromatin organization during spermatogenesis. Recruited by the large PER complex to the E-box elements of the circadian target genes such as PER2 itself or PER1, contributes to the conversion of local chromatin to a heterochromatin-like repressive state through H3 'Lys-9' trimethylation. In Mus musculus (Mouse), this protein is Histone-lysine N-methyltransferase SUV39H2 (Suv39h2).